Here is a 226-residue protein sequence, read N- to C-terminus: MLLRLVSNSWPQVILPPRPPKVLGLQAPRRARKRAEGTASSNVFSMFDQSQIQEFKESLALSPRLERNGMISAHCNLCLTGSSNSPASASQAFTIMDQNRDGFIDKEDLRDTFAALGRINVKNEELEAMVKEAPGPINFTVFLTMFGEKLKGTDPEETILHAFKVFDTEGKGFVKADVIKEKLMTQADRFSEEEVKQMFAAFPPDVCGNLDYRNLCYVITHGEEKD.

EF-hand domains lie at 84–119 (NSPASASQAFTIMDQNRDGFIDKEDLRDTFAALGRI), 154–189 (DPEETILHAFKVFDTEGKGFVKADVIKEKLMTQADR), and 190–225 (FSEEEVKQMFAAFPPDVCGNLDYRNLCYVITHGEEK). Ca(2+)-binding residues include aspartate 97, asparagine 99, aspartate 101, and aspartate 108.

In terms of assembly, myosin is a hexamer of 2 heavy chains and 4 light chains.

This is Myosin regulatory light chain 10 (MYL10) from Homo sapiens (Human).